Reading from the N-terminus, the 261-residue chain is MTKPTPTIHSLRDLRRLTPARVGLGRSGASVPTKALLDFTLDHARARDAVHASFDGAALTGELSALGLAVHEVRSRVRGRHDYLVRPDLGRQLDPESRDRLAGIGGPGGDLVLVIGDGLSPGAVHARAAAVVGRLLKRLTEAGIAVGPAVVANGARVALGDEIGALLGARMVAVLIGERPGLSSPASLGAYLTYAPRPGLTDAERNCVSNIHPAGLSEDEAAFKIGWLIREALARRLSGVALKDDSMLEAATAARELSAPG.

Residues Val157, Glu178, and Cys207 each contribute to the adenosylcob(III)alamin site.

Belongs to the EutC family. In terms of assembly, the basic unit is a heterodimer which dimerizes to form tetramers. The heterotetramers trimerize; 6 large subunits form a core ring with 6 small subunits projecting outwards. Adenosylcob(III)alamin serves as cofactor.

Its subcellular location is the bacterial microcompartment. It carries out the reaction ethanolamine = acetaldehyde + NH4(+). It functions in the pathway amine and polyamine degradation; ethanolamine degradation. In terms of biological role, catalyzes the deamination of various vicinal amino-alcohols to oxo compounds. Allows this organism to utilize ethanolamine as the sole source of nitrogen and carbon in the presence of external vitamin B12. In Rhodopseudomonas palustris (strain BisA53), this protein is Ethanolamine ammonia-lyase small subunit.